Here is a 1051-residue protein sequence, read N- to C-terminus: Lateral signaling target protein 2 homolog (1051 aa).

Disordered stretches follow at residues 305 to 440, 516 to 552, 566 to 703, and 837 to 968; these read PLGS…DEDL, GSNA…PSTS, HLPS…NASS, and IDLA…DGKA. Residues 319–358 show a composition bias toward low complexity; that stretch reads NNTSSSTSNNNNNNNNNSSSSSSSSSGSGSNTAKTSTSST. Residues 360–370 are compositionally biased toward basic and acidic residues; it reads KAVERLVDHRN. Residues 371–391 show a composition bias toward polar residues; it reads NNSSTVAGATQPSTARSPSML. Low complexity-rich tracts occupy residues 392–401 and 409–428; these read SLSAGSTPTA and PSHS…NPPA. The segment covering 518 to 528 has biased composition (polar residues); that stretch reads NAATERQQQQQ. Composition is skewed to low complexity over residues 533–549 and 568–582; these read LQPG…QDEP and PSSS…SSNQ. A phosphoserine mark is found at Ser-569 and Ser-570. Positions 583-596 are enriched in polar residues; the sequence is QTTIKTPNGNQSMP. Positions 597–606 are enriched in low complexity; that stretch reads NSSSSSSNHN. 2 stretches are compositionally biased toward basic residues: residues 607-637 and 650-672; these read NNRH…HPHH and HHHH…ARKR. Polar residues predominate over residues 692 to 703; the sequence is TPGSADTSNASS. Low complexity predominate over residues 840 to 852; that stretch reads ASGNNNGNSNAAA. Ser-861 bears the Phosphoserine mark. 2 stretches are compositionally biased toward low complexity: residues 879–924 and 937–960; these read QQQQ…SPIS and SSIG…MSPP. The segment at 965 to 1025 adopts an FYVE-type zinc-finger fold; sequence DGKAPRCMSC…VCRECYVREV (61 aa). The Zn(2+) site is built by Cys-971, Cys-974, Cys-987, Cys-990, Cys-995, Cys-998, Cys-1017, and Cys-1020. The interval 1028–1051 is disordered; sequence SRQAPAQPSQAHGQASRPQAASAS.

Belongs to the lst-2 family.

In terms of biological role, negative regulator of epidermal growth factor receptor (EGFR) signaling. This is Lateral signaling target protein 2 homolog from Drosophila mojavensis (Fruit fly).